A 343-amino-acid chain; its full sequence is SH2 domain-containing adapter protein D (343 aa).

Residues 1 to 176 are disordered; sequence MAKWLRDYLN…PADEYDQPWE (176 aa). 2 stretches are compositionally biased toward basic and acidic residues: residues 29–40 and 73–82; these read DILRAYREQKDL and IKVEAADMAR. The span at 92-102 shows a compositional bias: acidic residues; that stretch reads EEPEAETEYSD. Basic and acidic residues predominate over residues 160-176; the sequence is RPLEDERPADEYDQPWE. The 96-residue stretch at 225 to 320 folds into the SH2 domain; the sequence is WFHGPLSRAE…AEHLALLYPV (96 aa). The segment at 322-343 is disordered; sequence SSQSSQGPCTLAAKPERGQGDP.

Post-translationally, tyrosine phosphorylated by ABL. As to expression, specifically expressed in brain.

May function as an adapter protein. In Mus musculus (Mouse), this protein is SH2 domain-containing adapter protein D (Shd).